The chain runs to 310 residues: Ribosomal RNA small subunit methyltransferase H (310 aa).

Residues 32 to 34 (GGH), Asp-52, Phe-79, Asp-100, and Gln-107 contribute to the S-adenosyl-L-methionine site.

Belongs to the methyltransferase superfamily. RsmH family.

The protein localises to the cytoplasm. It carries out the reaction cytidine(1402) in 16S rRNA + S-adenosyl-L-methionine = N(4)-methylcytidine(1402) in 16S rRNA + S-adenosyl-L-homocysteine + H(+). Specifically methylates the N4 position of cytidine in position 1402 (C1402) of 16S rRNA. The chain is Ribosomal RNA small subunit methyltransferase H from Bacillus cereus (strain AH187).